A 537-amino-acid polypeptide reads, in one-letter code: Cytochrome P450 4F6 (537 aa).

Position 468 (Cys468) interacts with heme.

This sequence belongs to the cytochrome P450 family. Requires heme as cofactor. In terms of tissue distribution, high expression in liver and kidney. Lower expression in brain.

It is found in the endoplasmic reticulum membrane. It localises to the microsome membrane. It carries out the reaction an organic molecule + reduced [NADPH--hemoprotein reductase] + O2 = an alcohol + oxidized [NADPH--hemoprotein reductase] + H2O + H(+). The protein is Cytochrome P450 4F6 (Cyp4f6) of Rattus norvegicus (Rat).